The primary structure comprises 374 residues: Type IV secretion system protein PtlG (374 aa).

The chain crosses the membrane as a helical span at residues 38-56 (WMFALVAVALSCLLATGIW). The segment at 86–117 (HPREPEPAPLPDMPAAPDPILPQPRPAPPVPP) is disordered. Residues 92 to 117 (PAPLPDMPAAPDPILPQPRPAPPVPP) show a composition bias toward pro residues.

It belongs to the TrbI/VirB10 family.

It localises to the cell membrane. Its function is as follows. Component of the type IV secretion system ptl required for secretion of assembled pertussis toxin (PTX) through the outer membrane. The chain is Type IV secretion system protein PtlG (ptlG) from Bordetella pertussis (strain Tohama I / ATCC BAA-589 / NCTC 13251).